A 136-amino-acid chain; its full sequence is Secreted RxLR effector protein 15 (136 aa).

The N-terminal stretch at 1–22 (MRGHSALMMAVVTLAAVSSGAA) is a signal peptide. Positions 47–50 (RLLR) match the RxLR motif.

This sequence belongs to the RxLR effector family.

The protein localises to the secreted. Its subcellular location is the host nucleus. It localises to the host cytoplasm. Its function is as follows. Effector that completely suppresses the host cell death induced by cell death-inducing proteins. In Plasmopara viticola (Downy mildew of grapevine), this protein is Secreted RxLR effector protein 15.